Reading from the N-terminus, the 567-residue chain is Major facilitator superfamily transporter MG061 (567 aa).

12 helical membrane passes run 15–35, 78–98, 104–124, 193–213, 230–250, 264–284, 321–341, 363–383, 405–425, 426–446, 462–482, and 503–523; these read ITLW…WFVI, WTIT…VLKF, VLIM…GDPL, GYAL…TLVV, ILSN…FTPF, VYIM…FLWF, LIGV…PAWF, TGLA…FVVF, IVVL…SAAG, FALI…LSSS, LPIL…LFDI, and PGVI…NLIV.

Belongs to the major facilitator superfamily.

It localises to the cell membrane. This Mycoplasma genitalium (strain ATCC 33530 / DSM 19775 / NCTC 10195 / G37) (Mycoplasmoides genitalium) protein is Major facilitator superfamily transporter MG061.